The chain runs to 311 residues: tRNA-cytidine(32) 2-sulfurtransferase (311 aa).

A PP-loop motif motif is present at residues 47-52; sequence SGGKDS. [4Fe-4S] cluster-binding residues include cysteine 122, cysteine 125, and cysteine 213.

It belongs to the TtcA family. Homodimer. It depends on Mg(2+) as a cofactor. Requires [4Fe-4S] cluster as cofactor.

The protein localises to the cytoplasm. It catalyses the reaction cytidine(32) in tRNA + S-sulfanyl-L-cysteinyl-[cysteine desulfurase] + AH2 + ATP = 2-thiocytidine(32) in tRNA + L-cysteinyl-[cysteine desulfurase] + A + AMP + diphosphate + H(+). Its pathway is tRNA modification. Its function is as follows. Catalyzes the ATP-dependent 2-thiolation of cytidine in position 32 of tRNA, to form 2-thiocytidine (s(2)C32). The sulfur atoms are provided by the cysteine/cysteine desulfurase (IscS) system. The sequence is that of tRNA-cytidine(32) 2-sulfurtransferase from Escherichia coli O45:K1 (strain S88 / ExPEC).